The primary structure comprises 321 residues: MMRRHLLNAGDLSRDDAIAIFDDADRFAHALVGREIKKLPTLRGRTVITMFYENSTRTRVSFEVAGKWMSANVINVSPAGSSVGKGESLRDTALTLRAAGADALIIRHPASGAAHLLADWTAAETGEDGPAVINAGDGTHEHPTQALLDALTIRQRLGSIEGRRILIVGDILHSRVARSNVVLLDTLGAEVVLVAPRTLLPIGVDGWPATVSCDFDAELPAADAVLMLRVQAERMNGGFFPSVREYSCLYGLTERRQALLPGHAVVLHPGPMLRGMEIASSVADSSQSAVLQQVSNGVHVRMAVLFHVLVGTQSAEEEGAA.

The carbamoyl phosphate site is built by Arg57 and Thr58. Lys85 serves as a coordination point for L-aspartate. Carbamoyl phosphate-binding residues include Arg107, His142, and Gln145. Residues Arg175 and Arg229 each contribute to the L-aspartate site. The carbamoyl phosphate site is built by Gly270 and Pro271.

Belongs to the aspartate/ornithine carbamoyltransferase superfamily. ATCase family. As to quaternary structure, heterododecamer (2C3:3R2) of six catalytic PyrB chains organized as two trimers (C3), and six regulatory PyrI chains organized as three dimers (R2).

It catalyses the reaction carbamoyl phosphate + L-aspartate = N-carbamoyl-L-aspartate + phosphate + H(+). It participates in pyrimidine metabolism; UMP biosynthesis via de novo pathway; (S)-dihydroorotate from bicarbonate: step 2/3. Functionally, catalyzes the condensation of carbamoyl phosphate and aspartate to form carbamoyl aspartate and inorganic phosphate, the committed step in the de novo pyrimidine nucleotide biosynthesis pathway. The sequence is that of Aspartate carbamoyltransferase catalytic subunit from Mycobacterium leprae (strain TN).